The sequence spans 612 residues: Kelch repeat and BTB domain-containing protein 3 (612 aa).

A BTB domain is found at 52–119; sequence YDFKIIMKDE…AYTGKTKITD (68 aa). Residues 154–254 enclose the BACK domain; that stretch reads CLQLLSISDS…QLSEETLQDC (101 aa). Kelch repeat units follow at residues 295–341, 343–403, 404–454, 456–506, and 552–599; these read KYIF…SSYG, KIFL…MALD, RLFV…TCQN, IYVL…KAVP, and KIYI…VIQF.

This chain is Kelch repeat and BTB domain-containing protein 3, found in Homo sapiens (Human).